A 262-amino-acid polypeptide reads, in one-letter code: NAC domain-containing protein 71 (262 aa).

The 155-residue stretch at 6–160 folds into the NAC domain; that stretch reads LPPGFRFHPT…AFALCRVVKK (155 aa). The DNA-binding element occupies 107–166; sequence AGYRKTLVFYEGRAPLGDRTNWFMHEYRLCDIDDHSQKSPNFKGAFALCRVVKKNELKKN.

Its subcellular location is the nucleus. In terms of biological role, transcription factor involved in tissue reunion of wounded inflorescence stems. Required for the division of pith cells in the reunion process, which is dependent on polar-transported auxin and the wound-inducible hormones ethylene and jasmonate. Binds to the promoters of XTH19 and XTH20 to induce their expression via auxin signaling. XTH19 and XTH20 are involved in cell proliferation in the tissue reunion process of incised stems. Involved in hypocotyl graft union formation. Required for the auxin- mediated promotion of vascular tissue proliferation during hypocotyl graft attachment. The chain is NAC domain-containing protein 71 from Arabidopsis thaliana (Mouse-ear cress).